The sequence spans 354 residues: UDP-3-O-acylglucosamine N-acyltransferase (354 aa).

Residue His247 is the Proton acceptor of the active site.

Belongs to the transferase hexapeptide repeat family. LpxD subfamily. As to quaternary structure, homotrimer.

It catalyses the reaction a UDP-3-O-[(3R)-3-hydroxyacyl]-alpha-D-glucosamine + a (3R)-hydroxyacyl-[ACP] = a UDP-2-N,3-O-bis[(3R)-3-hydroxyacyl]-alpha-D-glucosamine + holo-[ACP] + H(+). It functions in the pathway bacterial outer membrane biogenesis; LPS lipid A biosynthesis. Catalyzes the N-acylation of UDP-3-O-acylglucosamine using 3-hydroxyacyl-ACP as the acyl donor. Is involved in the biosynthesis of lipid A, a phosphorylated glycolipid that anchors the lipopolysaccharide to the outer membrane of the cell. The protein is UDP-3-O-acylglucosamine N-acyltransferase of Chlamydia trachomatis serovar L2b (strain UCH-1/proctitis).